We begin with the raw amino-acid sequence, 97 residues long: Citrate lyase acyl carrier protein (97 aa).

O-(phosphoribosyl dephospho-coenzyme A)serine is present on serine 14.

Belongs to the CitD family. As to quaternary structure, oligomer with a subunit composition of (alpha,beta,gamma)6.

It is found in the cytoplasm. Covalent carrier of the coenzyme of citrate lyase. This is Citrate lyase acyl carrier protein from Yersinia enterocolitica serotype O:8 / biotype 1B (strain NCTC 13174 / 8081).